A 520-amino-acid polypeptide reads, in one-letter code: Anthranilate synthase component 1 (520 aa).

Residues S40, K50, and 291–293 each bind L-tryptophan; that span reads PYM. Residue 328-329 participates in chorismate binding; that stretch reads GT. A Mg(2+)-binding site is contributed by E361. Residues Y449, R469, 483 to 485, and G485 each bind chorismate; that span reads GAG. E498 is a Mg(2+) binding site.

This sequence belongs to the anthranilate synthase component I family. Homodimer. In fact, exists in a monomer-dimer equilibrium in solution, shifted spontaneously in favor of the dimer; the monomer has a reduced activity compared with the dimer. Heterotetramer consisting of two non-identical subunits: a beta subunit (TrpG) and a large alpha subunit (TrpE) (Potential). The cofactor is Mg(2+).

The enzyme catalyses chorismate + L-glutamine = anthranilate + pyruvate + L-glutamate + H(+). Its pathway is amino-acid biosynthesis; L-tryptophan biosynthesis; L-tryptophan from chorismate: step 1/5. Cooperatively feedback inhibited by tryptophan. In terms of biological role, part of a heterotetrameric complex that catalyzes the two-step biosynthesis of anthranilate, an intermediate in the biosynthesis of L-tryptophan. In the first step, the glutamine-binding beta subunit (TrpG) of anthranilate synthase (AS) provides the glutamine amidotransferase activity which generates ammonia as a substrate that, along with chorismate, is used in the second step, catalyzed by the large alpha subunit of AS (TrpE) to produce anthranilate. In the absence of TrpG, TrpE can synthesize anthranilate directly from chorismate and high concentrations of ammonia. The protein is Anthranilate synthase component 1 (trpE) of Salmonella typhimurium (strain LT2 / SGSC1412 / ATCC 700720).